Reading from the N-terminus, the 276-residue chain is Secretagogin (276 aa).

EF-hand domains are found at residues 12–47 (LDAAGFWQVWQRFDADEKGYIEEKELDAFFLHMLMK), 58–93 (NLHKVKQQFMTTQDASKDGRIRMKELAGMFLSEDEN), 105–140 (DSSVEFMQIWRKYDADSSGFISAAELRNFLRDLFLH), 149–184 (KLEEYTGTMMKIFDRNKDGRLDLNDLARILALQENF), 197–232 (ERKRDFEKIFAYYDVSKTGALEGPEVDGFVKDMMEL), and 240–276 (VDLDKFREILLRHCDVNKDGKIQKSELALCLGLKINP). 27 residues coordinate Ca(2+): D25, D27, Y31, E36, D71, S73, D75, R77, E82, D118, D120, S122, E129, D162, N164, D166, R168, D173, D210, S212, T214, E221, D254, N256, D258, K260, and E265.

Expressed at high levels in the pancreatic islets of Langerhans and to a much lesser extent in the gastrointestinal tract (stomach, small intestine and colon), the adrenal medulla and cortex and the thyroid C-cells. In the brain, the expression is restricted to distinct subtypes of neurons with highest expression in the molecular layer of the cerebellum (stellate and basket cells), in the anterior part of the pituitary gland, in the thalamus, in the hypothalamus and in a subgroup of neocortical neurons.

Its subcellular location is the cytoplasm. It localises to the secreted. It is found in the cytoplasmic vesicle. The protein resides in the secretory vesicle membrane. This is Secretagogin (SCGN) from Homo sapiens (Human).